Consider the following 177-residue polypeptide: Ribosome rescue factor SmrB (177 aa).

Residues 92-167 (LDLHGLTRQK…GDAAILVLIE (76 aa)) form the Smr domain.

It belongs to the SmrB family. In terms of assembly, associates with collided ribosomes, but not with correctly translating polysomes.

In terms of biological role, acts as a ribosome collision sensor. Detects stalled/collided disomes (pairs of ribosomes where the leading ribosome is stalled and a second ribosome has collided with it) and endonucleolytically cleaves mRNA at the 5' boundary of the stalled ribosome. Stalled/collided disomes form a new interface (primarily via the 30S subunits) that binds SmrB. Cleaved mRNA becomes available for tmRNA ligation, leading to ribosomal subunit dissociation and rescue of stalled ribosomes. The polypeptide is Ribosome rescue factor SmrB (Haemophilus ducreyi (strain 35000HP / ATCC 700724)).